Here is a 436-residue protein sequence, read N- to C-terminus: Trigger factor (436 aa).

One can recognise a PPIase FKBP-type domain in the interval 161–246; the sequence is GDQVNIDFVG…VNSVAAPQLP (86 aa).

It belongs to the FKBP-type PPIase family. Tig subfamily.

The protein localises to the cytoplasm. It catalyses the reaction [protein]-peptidylproline (omega=180) = [protein]-peptidylproline (omega=0). In terms of biological role, involved in protein export. Acts as a chaperone by maintaining the newly synthesized protein in an open conformation. Functions as a peptidyl-prolyl cis-trans isomerase. In Stutzerimonas stutzeri (strain A1501) (Pseudomonas stutzeri), this protein is Trigger factor.